Consider the following 434-residue polypeptide: 23S rRNA (uracil(1939)-C(5))-methyltransferase RlmD (434 aa).

In terms of domain architecture, TRAM spans 10 to 68 (RVTTRQIITVTVNDLDPFGQGVARHQGKALFVSGVLPHEQAEVVLVEDKKQYARAEVKR). 4 residues coordinate [4Fe-4S] cluster: Cys-81, Cys-87, Cys-90, and Cys-162. Residues Gln-265, Phe-294, Asn-299, Glu-315, Asn-342, and Asp-363 each contribute to the S-adenosyl-L-methionine site. Cys-389 functions as the Nucleophile in the catalytic mechanism.

It belongs to the class I-like SAM-binding methyltransferase superfamily. RNA M5U methyltransferase family. RlmD subfamily.

The catalysed reaction is uridine(1939) in 23S rRNA + S-adenosyl-L-methionine = 5-methyluridine(1939) in 23S rRNA + S-adenosyl-L-homocysteine + H(+). In terms of biological role, catalyzes the formation of 5-methyl-uridine at position 1939 (m5U1939) in 23S rRNA. The sequence is that of 23S rRNA (uracil(1939)-C(5))-methyltransferase RlmD from Klebsiella pneumoniae subsp. pneumoniae (strain ATCC 700721 / MGH 78578).